The sequence spans 104 residues: N(4)-acetylcytidine amidohydrolase (104 aa).

Residues 6–102 (TFYTRFQQDI…ELYVIAFKKV (97 aa)) enclose the ASCH domain. Lys20 acts as the Proton acceptor in catalysis. Thr23 acts as the Nucleophile in catalysis. Glu73 functions as the Proton donor in the catalytic mechanism.

This sequence belongs to the N(4)-acetylcytidine amidohydrolase family.

The enzyme catalyses N(4)-acetylcytidine + H2O = cytidine + acetate + H(+). The catalysed reaction is N(4)-acetyl-2'-deoxycytidine + H2O = 2'-deoxycytidine + acetate + H(+). It catalyses the reaction N(4)-acetylcytosine + H2O = cytosine + acetate + H(+). Functionally, catalyzes the hydrolysis of N(4)-acetylcytidine (ac4C). This Cronobacter sakazakii (strain ATCC BAA-894) (Enterobacter sakazakii) protein is N(4)-acetylcytidine amidohydrolase.